Consider the following 729-residue polypeptide: Neurochondrin (729 aa).

Position 2 is an N-acetylserine (Ser-2). The residue at position 2 (Ser-2) is a Phosphoserine. S-palmitoyl cysteine attachment occurs at residues Cys-3 and Cys-4. Arg-75 bears the Asymmetric dimethylarginine mark. A Phosphoserine modification is found at Ser-448.

It belongs to the neurochondrin family. In terms of assembly, interacts with MCHR1. Interacts with SEMA4C. Interacts with DIAPH1 (via FH3 domain). Interacts with GRM5. Palmitoylated. Palmitoylation by ZDHHC1, ZDHHC3 and ZDHHC11 regulates the association of NCDN with endosome membranes. May also be palmitoylated by ZDHHC7.

Its subcellular location is the cytoplasm. It localises to the cytosol. The protein localises to the endosome membrane. The protein resides in the cell projection. It is found in the dendrite. Its subcellular location is the postsynapse. In terms of biological role, probably involved in signal transduction, in the nervous system, via increasing cell surface localization of GRM5 and positively regulating its signaling. Required for the spatial learning process. Acts as a negative regulator of Ca(2+)-calmodulin-dependent protein kinase 2 (CaMK2) phosphorylation. May play a role in modulating melanin-concentrating hormone-mediated functions via its interaction with MCHR1 that interferes with G protein-coupled signal transduction. May be involved in bone metabolism. May also be involved in neurite outgrowth. In Bos taurus (Bovine), this protein is Neurochondrin (NCDN).